The following is a 281-amino-acid chain: ATP phosphoribosyltransferase (281 aa).

It belongs to the ATP phosphoribosyltransferase family. Long subfamily. The cofactor is Mg(2+).

The protein resides in the cytoplasm. The enzyme catalyses 1-(5-phospho-beta-D-ribosyl)-ATP + diphosphate = 5-phospho-alpha-D-ribose 1-diphosphate + ATP. The protein operates within amino-acid biosynthesis; L-histidine biosynthesis; L-histidine from 5-phospho-alpha-D-ribose 1-diphosphate: step 1/9. Its activity is regulated as follows. Feedback inhibited by histidine. Its function is as follows. Catalyzes the condensation of ATP and 5-phosphoribose 1-diphosphate to form N'-(5'-phosphoribosyl)-ATP (PR-ATP). Has a crucial role in the pathway because the rate of histidine biosynthesis seems to be controlled primarily by regulation of HisG enzymatic activity. The sequence is that of ATP phosphoribosyltransferase from Corynebacterium diphtheriae (strain ATCC 700971 / NCTC 13129 / Biotype gravis).